A 554-amino-acid chain; its full sequence is Carboxypeptidase Y homolog A (554 aa).

The first 17 residues, 1 to 17 (MRIAASTVLFGAASAAS), serve as a signal peptide directing secretion. The propeptide occupies 18 to 137 (FQQQAQHVLS…RLEEYNLRVK (120 aa)). 5 disulfides stabilise this stretch: Cys191–Cys431, Cys325–Cys339, Cys349–Cys372, Cys356–Cys365, and Cys394–Cys401. N-linked (GlcNAc...) asparagine glycosylation is present at Asn222. Ser278 is an active-site residue. Residue Asp470 is part of the active site. An N-linked (GlcNAc...) asparagine glycan is attached at Asn518. His529 is a catalytic residue.

It belongs to the peptidase S10 family.

The protein resides in the vacuole. The catalysed reaction is Release of a C-terminal amino acid with broad specificity.. Vacuolar carboxypeptidase involved in degradation of small peptides. Digests preferentially peptides containing an aliphatic or hydrophobic residue in P1' position, as well as methionine, leucine or phenylalanine in P1 position of ester substrate. In Chaetomium globosum (strain ATCC 6205 / CBS 148.51 / DSM 1962 / NBRC 6347 / NRRL 1970) (Soil fungus), this protein is Carboxypeptidase Y homolog A (CPYA).